Reading from the N-terminus, the 527-residue chain is Bifunctional dihydrofolate reductase-thymidylate synthase (527 aa).

The DHFR domain occupies 28–238 (PFSVVVASDE…KKYQFEKLVP (211 aa)). Val-32 contributes to the substrate binding site. Residues Ala-34 and 40 to 46 (GIGDGGT) each bind NADP(+). Position 54 (Asp-54) interacts with substrate. NADP(+) contacts are provided by residues 84–86 (RKT) and 105–108 (LSRS). Positions 160, 166, and 184 each coordinate substrate. 161 to 168 (GGGTIYKQ) is an NADP(+) binding site. The interval 243–527 (EEQYLNLVGR…YPVISMEMAV (285 aa)) is thymidylate synthase. Arg-263 lines the dUMP pocket. Cys-409 is an active-site residue. DUMP-binding positions include His-410, 428-432 (QRSCD), Asn-440, and 470-472 (HVY).

In the N-terminal section; belongs to the dihydrofolate reductase family. This sequence in the C-terminal section; belongs to the thymidylate synthase family. As to quaternary structure, homodimer.

It catalyses the reaction dUMP + (6R)-5,10-methylene-5,6,7,8-tetrahydrofolate = 7,8-dihydrofolate + dTMP. It carries out the reaction (6S)-5,6,7,8-tetrahydrofolate + NADP(+) = 7,8-dihydrofolate + NADPH + H(+). Its pathway is pyrimidine metabolism; dTTP biosynthesis. The protein operates within cofactor biosynthesis; tetrahydrofolate biosynthesis; 5,6,7,8-tetrahydrofolate from 7,8-dihydrofolate: step 1/1. Functionally, bifunctional enzyme. Involved in de novo dTMP biosynthesis. Key enzyme in folate metabolism. Catalyzes an essential reaction for de novo glycine and purine synthesis, DNA precursor synthesis, and for the conversion of dUMP to dTMP. The protein is Bifunctional dihydrofolate reductase-thymidylate synthase of Trypanosoma brucei brucei.